A 230-amino-acid polypeptide reads, in one-letter code: Germin-like protein 5-1 (230 aa).

A signal peptide spans 1–20 (MAMVGRSLLLLLLLVTLAAG). Cysteine 38 and cysteine 53 are disulfide-bonded. Residues 86-219 (YGFTARSVDI…TLLTDEATVD (134 aa)) form the Cupin type-1 domain. Histidine 119, histidine 121, glutamate 126, and histidine 167 together coordinate Mn(2+). The N-linked (GlcNAc...) asparagine glycan is linked to asparagine 172.

This sequence belongs to the germin family. As to quaternary structure, oligomer (believed to be a pentamer but probably hexamer).

It localises to the secreted. The protein resides in the extracellular space. Its subcellular location is the apoplast. Its function is as follows. May play a role in plant defense. Probably has no oxalate oxidase activity even if the active site is conserved. In Oryza sativa subsp. japonica (Rice), this protein is Germin-like protein 5-1.